The sequence spans 400 residues: Na(+)/H(+) antiporter NhaA (400 aa).

12 consecutive transmembrane segments (helical) span residues 26–46 (AGGI…NSPL), 71–91 (LIHW…GMEV), 107–127 (IFPA…YWFI), 137–157 (GWAI…ALLS), 166–186 (IFLL…IALF), 189–209 (HGLS…LILL), 212–232 (FKVS…ASVL), 233–253 (KSGV…PLKG), 273–293 (FVIL…GIDV), 299–319 (PLLL…IFGF), 340–360 (IFAV…LASL), and 373–393 (LSRL…YLFL).

It belongs to the NhaA Na(+)/H(+) (TC 2.A.33) antiporter family.

It localises to the cell inner membrane. The enzyme catalyses Na(+)(in) + 2 H(+)(out) = Na(+)(out) + 2 H(+)(in). Functionally, na(+)/H(+) antiporter that extrudes sodium in exchange for external protons. In Haemophilus influenzae (strain 86-028NP), this protein is Na(+)/H(+) antiporter NhaA.